A 237-amino-acid polypeptide reads, in one-letter code: Small ribosomal subunit protein uS2m (237 aa).

Belongs to the universal ribosomal protein uS2 family.

It localises to the mitochondrion. This chain is Small ribosomal subunit protein uS2m (RPS2), found in Marchantia polymorpha (Common liverwort).